Consider the following 681-residue polypeptide: DNA-directed RNA polymerase subunit beta' (681 aa).

Zn(2+)-binding residues include Cys69, Cys71, Cys87, and Cys90. 3 residues coordinate Mg(2+): Asp489, Asp491, and Asp493.

This sequence belongs to the RNA polymerase beta' chain family. RpoC1 subfamily. In plastids the minimal PEP RNA polymerase catalytic core is composed of four subunits: alpha, beta, beta', and beta''. When a (nuclear-encoded) sigma factor is associated with the core the holoenzyme is formed, which can initiate transcription. It depends on Mg(2+) as a cofactor. Zn(2+) serves as cofactor.

Its subcellular location is the plastid. It is found in the chloroplast. The catalysed reaction is RNA(n) + a ribonucleoside 5'-triphosphate = RNA(n+1) + diphosphate. Functionally, DNA-dependent RNA polymerase catalyzes the transcription of DNA into RNA using the four ribonucleoside triphosphates as substrates. The polypeptide is DNA-directed RNA polymerase subunit beta' (Solanum bulbocastanum (Wild potato)).